A 156-amino-acid chain; its full sequence is uncharacterized protein (156 aa).

The N-terminal stretch at 1-27 is a signal peptide; sequence MKLLVLRLILIISTIFVLLNLSCMVNG. N-linked (GlcNAc...) asparagine glycans are attached at residues Asn20, Asn83, Asn103, Asn106, and Asn134.

The protein localises to the secreted. This is an uncharacterized protein from Dictyostelium discoideum (Social amoeba).